The sequence spans 408 residues: PTI1-like tyrosine-protein kinase 3 (408 aa).

The span at 59–76 (SSENEHLRSPKHHNDFGH) shows a compositional bias: basic and acidic residues. Residues 59-91 (SSENEHLRSPKHHNDFGHHTRKPQAAVKPDALK) form a disordered region. The Protein kinase domain maps to 113–395 (FGSKSLIGEG…IVVKALQPLL (283 aa)). Residues 119–127 (IGEGSYGRA) and K141 each bind ATP. D245 acts as the Proton acceptor in catalysis.

It belongs to the protein kinase superfamily. Tyr protein kinase family. In terms of assembly, interacts with OXI1. In terms of processing, phosphorylated by OXI1.

The protein localises to the cell membrane. It carries out the reaction L-tyrosyl-[protein] + ATP = O-phospho-L-tyrosyl-[protein] + ADP + H(+). This chain is PTI1-like tyrosine-protein kinase 3 (PTI13), found in Arabidopsis thaliana (Mouse-ear cress).